The sequence spans 692 residues: Elongation factor G (692 aa).

The tr-type G domain occupies 8 to 282 (DKTRNIGIMA…AVLDYLPAPT (275 aa)). Residues 17-24 (AHIDAGKT), 81-85 (DTPGH), and 135-138 (NKMD) each bind GTP.

It belongs to the TRAFAC class translation factor GTPase superfamily. Classic translation factor GTPase family. EF-G/EF-2 subfamily.

The protein localises to the cytoplasm. Functionally, catalyzes the GTP-dependent ribosomal translocation step during translation elongation. During this step, the ribosome changes from the pre-translocational (PRE) to the post-translocational (POST) state as the newly formed A-site-bound peptidyl-tRNA and P-site-bound deacylated tRNA move to the P and E sites, respectively. Catalyzes the coordinated movement of the two tRNA molecules, the mRNA and conformational changes in the ribosome. The protein is Elongation factor G of Bacillus pumilus (strain SAFR-032).